The chain runs to 156 residues: ATP synthase subunit b (156 aa).

A helical transmembrane segment spans residues 7 to 26 (ILGQAIAFVLFVWFCMKYVW).

Belongs to the ATPase B chain family. As to quaternary structure, F-type ATPases have 2 components, F(1) - the catalytic core - and F(0) - the membrane proton channel. F(1) has five subunits: alpha(3), beta(3), gamma(1), delta(1), epsilon(1). F(0) has three main subunits: a(1), b(2) and c(10-14). The alpha and beta chains form an alternating ring which encloses part of the gamma chain. F(1) is attached to F(0) by a central stalk formed by the gamma and epsilon chains, while a peripheral stalk is formed by the delta and b chains.

It is found in the cell inner membrane. F(1)F(0) ATP synthase produces ATP from ADP in the presence of a proton or sodium gradient. F-type ATPases consist of two structural domains, F(1) containing the extramembraneous catalytic core and F(0) containing the membrane proton channel, linked together by a central stalk and a peripheral stalk. During catalysis, ATP synthesis in the catalytic domain of F(1) is coupled via a rotary mechanism of the central stalk subunits to proton translocation. Functionally, component of the F(0) channel, it forms part of the peripheral stalk, linking F(1) to F(0). This Pectobacterium atrosepticum (strain SCRI 1043 / ATCC BAA-672) (Erwinia carotovora subsp. atroseptica) protein is ATP synthase subunit b.